The primary structure comprises 381 residues: Alanine racemase, catabolic (381 aa).

Lys-55 acts as the Proton acceptor; specific for D-alanine in catalysis. Lys-55 carries the N6-(pyridoxal phosphate)lysine modification. A substrate-binding site is contributed by Arg-154. Catalysis depends on Tyr-276, which acts as the Proton acceptor; specific for L-alanine. Met-322 provides a ligand contact to substrate.

This sequence belongs to the alanine racemase family. Pyridoxal 5'-phosphate is required as a cofactor.

It carries out the reaction L-alanine = D-alanine. Its function is as follows. Isomerizes L-alanine to D-alanine which is then oxidized to pyruvate by DadA. This chain is Alanine racemase, catabolic (dadB), found in Mesorhizobium japonicum (strain LMG 29417 / CECT 9101 / MAFF 303099) (Mesorhizobium loti (strain MAFF 303099)).